We begin with the raw amino-acid sequence, 1099 residues long: Carbamoyl phosphate synthase large chain (1099 aa).

A carboxyphosphate synthetic domain region spans residues 1 to 402; sequence MPKRTDLKSV…ALQKALRSLE (402 aa). The ATP site is built by Arg129, Arg169, Gly175, Gly176, Glu208, Ile210, Glu215, Gly241, Val242, His243, Gln285, and Glu299. Residues 133 to 328 enclose the ATP-grasp 1 domain; sequence KGVVERCGAE…IAKIATKLSL (196 aa). Mg(2+) is bound by residues Gln285, Glu299, and Asn301. Residues Gln285, Glu299, and Asn301 each coordinate Mn(2+). The tract at residues 403 to 546 is oligomerization domain; the sequence is QKGSQLDFSH…YHYSSYDEED (144 aa). Positions 547–950 are carbamoyl phosphate synthetic domain; it reads EVALHSKPSI…AFAKSQAAAN (404 aa). The region spanning 677–868 is the ATP-grasp 2 domain; it reads SRVLDEAGLI…MAKAAALIGT (192 aa). Residues Arg713, Arg752, Leu754, Glu759, Gly784, Ile785, His786, Ser787, Gln827, and Glu839 each contribute to the ATP site. Mg(2+)-binding residues include Gln827, Glu839, and Asn841. Mn(2+) is bound by residues Gln827, Glu839, and Asn841. In terms of domain architecture, MGS-like spans 951-1099; it reads NALPTEGKIF…AENLKALQNG (149 aa). Residues 951–1099 are allosteric domain; sequence NALPTEGKIF…AENLKALQNG (149 aa).

This sequence belongs to the CarB family. As to quaternary structure, composed of two chains; the small (or glutamine) chain promotes the hydrolysis of glutamine to ammonia, which is used by the large (or ammonia) chain to synthesize carbamoyl phosphate. Tetramer of heterodimers (alpha,beta)4. Mg(2+) serves as cofactor. It depends on Mn(2+) as a cofactor.

The catalysed reaction is hydrogencarbonate + L-glutamine + 2 ATP + H2O = carbamoyl phosphate + L-glutamate + 2 ADP + phosphate + 2 H(+). The enzyme catalyses hydrogencarbonate + NH4(+) + 2 ATP = carbamoyl phosphate + 2 ADP + phosphate + 2 H(+). Its pathway is amino-acid biosynthesis; L-arginine biosynthesis; carbamoyl phosphate from bicarbonate: step 1/1. The protein operates within pyrimidine metabolism; UMP biosynthesis via de novo pathway; (S)-dihydroorotate from bicarbonate: step 1/3. Its function is as follows. Large subunit of the glutamine-dependent carbamoyl phosphate synthetase (CPSase). CPSase catalyzes the formation of carbamoyl phosphate from the ammonia moiety of glutamine, carbonate, and phosphate donated by ATP, constituting the first step of 2 biosynthetic pathways, one leading to arginine and/or urea and the other to pyrimidine nucleotides. The large subunit (synthetase) binds the substrates ammonia (free or transferred from glutamine from the small subunit), hydrogencarbonate and ATP and carries out an ATP-coupled ligase reaction, activating hydrogencarbonate by forming carboxy phosphate which reacts with ammonia to form carbamoyl phosphate. This Arthrobacter sp. (strain FB24) protein is Carbamoyl phosphate synthase large chain.